Here is a 145-residue protein sequence, read N- to C-terminus: Putative BCoR-like protein 2 (145 aa).

Basic and acidic residues predominate over residues 1–27 (MKEKLSKKRAEVKGNRSWLEEFLKPSD). The disordered stretch occupies residues 1-58 (MKEKLSKKRAEVKGNRSWLEEFLKPSDNEEGPPPKNKVLSNNASSQKPTHSSCIPLLR). Residues 38–52 (VLSNNASSQKPTHSS) show a composition bias toward polar residues.

It belongs to the BCOR family.

The polypeptide is Putative BCoR-like protein 2 (BCORP1) (Homo sapiens (Human)).